Reading from the N-terminus, the 65-residue chain is Large ribosomal subunit protein bL35 (65 aa).

Residues 1–21 (MPKMKTKSGAAKRFTVRAGGT) are disordered.

The protein belongs to the bacterial ribosomal protein bL35 family.

This is Large ribosomal subunit protein bL35 from Nitrosospira multiformis (strain ATCC 25196 / NCIMB 11849 / C 71).